Consider the following 217-residue polypeptide: Frizzled-8 (217 aa).

The Extracellular segment spans residues 1–26; it reads AGAAELQPELAVAEHVRYESTGPALC. The chain crosses the membrane as a helical span at residues 27–47; the sequence is TVVFLLVYFFGMASSIWWVIL. The Cytoplasmic portion of the chain corresponds to 48–69; it reads SLTWFLAAGMKWGNEAIAGYAQ. The helical transmembrane segment at 70–90 threads the bilayer; sequence YFHLAAWLLPSVKSIAVLALS. At 91–113 the chain is on the extracellular side; sequence SVDGDPVAGICYVGNQSLENLRG. Asn105 carries an N-linked (GlcNAc...) asparagine glycan. The helical transmembrane segment at 114–134 threads the bilayer; the sequence is FVLAPLVVYLFTGSLFLLAGF. The Cytoplasmic portion of the chain corresponds to 135–160; the sequence is VSLFRIRSVIKQGGTKTDKLEKLMIR. A helical membrane pass occupies residues 161 to 181; that stretch reads IGIFTVLYTVPATIVIACYIY. The Extracellular segment spans residues 182 to 209; the sequence is EQHNREAWEQAQNCSCPGDPHRPKPDYA. Asn194 carries an N-linked (GlcNAc...) asparagine glycan. A helical membrane pass occupies residues 210-217; that stretch reads VFMLKYFM.

Belongs to the G-protein coupled receptor Fz/Smo family.

Its subcellular location is the membrane. It localises to the cell membrane. Functionally, receptor for Wnt proteins. Most of frizzled receptors are coupled to the beta-catenin canonical signaling pathway, which leads to the activation of disheveled proteins, inhibition of GSK-3 kinase, nuclear accumulation of beta-catenin and activation of Wnt target genes. A second signaling pathway involving PKC and calcium fluxes has been seen for some family members, but it is not yet clear if it represents a distinct pathway or if it can be integrated in the canonical pathway, as PKC seems to be required for Wnt-mediated inactivation of GSK-3 kinase. Both pathways seem to involve interactions with G-proteins. May be involved in transduction and intercellular transmission of polarity information during tissue morphogenesis and/or in differentiated tissues. This chain is Frizzled-8 (FZD8), found in Gallus gallus (Chicken).